Reading from the N-terminus, the 163-residue chain is 6,7-dimethyl-8-ribityllumazine synthase (163 aa).

Residues F27, A58–E60, and C87–V89 contribute to the 5-amino-6-(D-ribitylamino)uracil site. D92 to T93 provides a ligand contact to (2S)-2-hydroxy-3-oxobutyl phosphate. The active-site Proton donor is the H95. Residue N120 coordinates 5-amino-6-(D-ribitylamino)uracil. (2S)-2-hydroxy-3-oxobutyl phosphate is bound at residue R134.

It belongs to the DMRL synthase family.

It catalyses the reaction (2S)-2-hydroxy-3-oxobutyl phosphate + 5-amino-6-(D-ribitylamino)uracil = 6,7-dimethyl-8-(1-D-ribityl)lumazine + phosphate + 2 H2O + H(+). Its pathway is cofactor biosynthesis; riboflavin biosynthesis; riboflavin from 2-hydroxy-3-oxobutyl phosphate and 5-amino-6-(D-ribitylamino)uracil: step 1/2. Its function is as follows. Catalyzes the formation of 6,7-dimethyl-8-ribityllumazine by condensation of 5-amino-6-(D-ribitylamino)uracil with 3,4-dihydroxy-2-butanone 4-phosphate. This is the penultimate step in the biosynthesis of riboflavin. In Nitrobacter winogradskyi (strain ATCC 25391 / DSM 10237 / CIP 104748 / NCIMB 11846 / Nb-255), this protein is 6,7-dimethyl-8-ribityllumazine synthase.